The sequence spans 193 residues: Ribosomal RNA small subunit methyltransferase G (193 aa).

S-adenosyl-L-methionine is bound by residues Gly-64, Leu-69, 113-114, and Arg-126; that span reads IE.

This sequence belongs to the methyltransferase superfamily. RNA methyltransferase RsmG family.

It localises to the cytoplasm. It carries out the reaction guanosine(527) in 16S rRNA + S-adenosyl-L-methionine = N(7)-methylguanosine(527) in 16S rRNA + S-adenosyl-L-homocysteine. Its function is as follows. Specifically methylates the N7 position of guanine in position 527 of 16S rRNA. This is Ribosomal RNA small subunit methyltransferase G from Rickettsia massiliae (strain Mtu5).